The chain runs to 380 residues: Flap endonuclease 1 (380 aa).

The segment at 1 to 104 is N-domain; the sequence is MGIKGLSQLI…GELTKRAEKR (104 aa). D34 is a Mg(2+) binding site. The DNA site is built by R47 and R70. Mg(2+)-binding residues include D86, E158, E160, D179, and D181. Positions 122–253 are I-domain; sequence DIDKFNRRLV…KKAVELINKH (132 aa). E158 provides a ligand contact to DNA. Residues G231 and D233 each contribute to the DNA site. D233 provides a ligand contact to Mg(2+). An interaction with PCNA region spans residues 336-344; that stretch reads TQGRLDSFF. The disordered stretch occupies residues 342–380; that stretch reads SFFKVLPSTPNPKRKIEDKKTPASKKAKTTGGKPGRKPK. The span at 363-380 shows a compositional bias: basic residues; it reads PASKKAKTTGGKPGRKPK.

This sequence belongs to the XPG/RAD2 endonuclease family. FEN1 subfamily. Interacts with PCNA. Three molecules of FEN1 bind to one PCNA trimer with each molecule binding to one PCNA monomer. PCNA stimulates the nuclease activity without altering cleavage specificity. Mg(2+) is required as a cofactor. Phosphorylated. Phosphorylation upon DNA damage induces relocalization to the nuclear plasma.

Its subcellular location is the nucleus. The protein resides in the nucleolus. It is found in the nucleoplasm. The protein localises to the mitochondrion. Functionally, structure-specific nuclease with 5'-flap endonuclease and 5'-3' exonuclease activities involved in DNA replication and repair. During DNA replication, cleaves the 5'-overhanging flap structure that is generated by displacement synthesis when DNA polymerase encounters the 5'-end of a downstream Okazaki fragment. It enters the flap from the 5'-end and then tracks to cleave the flap base, leaving a nick for ligation. Also involved in the long patch base excision repair (LP-BER) pathway, by cleaving within the apurinic/apyrimidinic (AP) site-terminated flap. Acts as a genome stabilization factor that prevents flaps from equilibrating into structures that lead to duplications and deletions. Also possesses 5'-3' exonuclease activity on nicked or gapped double-stranded DNA, and exhibits RNase H activity. Also involved in replication and repair of rDNA and in repairing mitochondrial DNA. The sequence is that of Flap endonuclease 1 from Aedes aegypti (Yellowfever mosquito).